A 67-amino-acid polypeptide reads, in one-letter code: DNA-directed RNA polymerase subunit omega (67 aa).

This sequence belongs to the RNA polymerase subunit omega family. The RNAP catalytic core consists of 2 alpha, 1 beta, 1 beta' and 1 omega subunit. When a sigma factor is associated with the core the holoenzyme is formed, which can initiate transcription.

It carries out the reaction RNA(n) + a ribonucleoside 5'-triphosphate = RNA(n+1) + diphosphate. Functionally, promotes RNA polymerase assembly. Latches the N- and C-terminal regions of the beta' subunit thereby facilitating its interaction with the beta and alpha subunits. The polypeptide is DNA-directed RNA polymerase subunit omega (Nitrosomonas eutropha (strain DSM 101675 / C91 / Nm57)).